Here is a 232-residue protein sequence, read N- to C-terminus: Large ribosomal subunit protein uL1 (232 aa).

It belongs to the universal ribosomal protein uL1 family. As to quaternary structure, part of the 50S ribosomal subunit.

Binds directly to 23S rRNA. The L1 stalk is quite mobile in the ribosome, and is involved in E site tRNA release. Its function is as follows. Protein L1 is also a translational repressor protein, it controls the translation of the L11 operon by binding to its mRNA. The sequence is that of Large ribosomal subunit protein uL1 from Bordetella bronchiseptica (strain ATCC BAA-588 / NCTC 13252 / RB50) (Alcaligenes bronchisepticus).